The chain runs to 509 residues: Probable glycine dehydrogenase (decarboxylating) subunit 2 (509 aa).

Lysine 278 carries the post-translational modification N6-(pyridoxal phosphate)lysine.

Belongs to the GcvP family. C-terminal subunit subfamily. In terms of assembly, the glycine cleavage system is composed of four proteins: P, T, L and H. In this organism, the P 'protein' is a heterodimer of two subunits. It depends on pyridoxal 5'-phosphate as a cofactor.

It catalyses the reaction N(6)-[(R)-lipoyl]-L-lysyl-[glycine-cleavage complex H protein] + glycine + H(+) = N(6)-[(R)-S(8)-aminomethyldihydrolipoyl]-L-lysyl-[glycine-cleavage complex H protein] + CO2. In terms of biological role, the glycine cleavage system catalyzes the degradation of glycine. The P protein binds the alpha-amino group of glycine through its pyridoxal phosphate cofactor; CO(2) is released and the remaining methylamine moiety is then transferred to the lipoamide cofactor of the H protein. The polypeptide is Probable glycine dehydrogenase (decarboxylating) subunit 2 (Saccharolobus islandicus (strain Y.N.15.51 / Yellowstone #2) (Sulfolobus islandicus)).